The chain runs to 193 residues: Major structural subunit of bundle-forming pilus (193 aa).

A propeptide spanning residues methionine 1–glycine 13 is cleaved from the precursor. N-methylleucine is present on leucine 14. A helical transmembrane segment spans residues leucine 14–phenylalanine 35. Cysteine 129 and cysteine 179 are joined by a disulfide.

This sequence belongs to the N-Me-Phe pilin family. In terms of assembly, 10 to 100 laterally aligned filaments or bundle-forming pili coalesce into rope-like bundles. These form linkages between the bacteria within the enteropathogenic E.coli (EPEC) microcolonies that are attached to epithelial cells.

The protein resides in the fimbrium. Its subcellular location is the membrane. Functionally, major repeating bundle-forming pilus (BFP) subunit. Is required for EPEC localized adherence. The sequence is that of Major structural subunit of bundle-forming pilus (bfpA) from Escherichia coli O111:H-.